The chain runs to 313 residues: N(5)-(carboxyethyl)ornithine synthase (313 aa).

Arg-15, Lys-71, and His-92 together coordinate pyruvate. 171 to 176 (GSGNVA) serves as a coordination point for NADP(+).

It belongs to the AlaDH/PNT family. CEOS subfamily. Homotetramer.

It catalyses the reaction N(5)-[1(S)-1-carboxyethyl]-L-ornithine + NADP(+) + H2O = L-ornithine + pyruvate + NADPH + H(+). With respect to regulation, is potently inhibited by the reaction product N(5)-(L-1-carboxyethyl)-L-ornithine. In terms of biological role, catalyzes the NADPH-dependent reductive condensation between pyruvic acid and the side chain amino group of L-ornithine to form N(5)-(L-1-carboxyethyl)-L-ornithine. To a lesser extent, can also use L-lysine as substrate (yielding N(6)-(L-1-carboxyethyl)-L-lysine). NADH cannot replace NADPH in the condensation reaction. The chain is N(5)-(carboxyethyl)ornithine synthase (ceo) from Lactococcus lactis subsp. lactis (Streptococcus lactis).